A 130-amino-acid chain; its full sequence is Small ribosomal subunit protein uS9 (130 aa).

The interval 109–130 (RVKERKKPGLKKARKARQFSKR) is disordered. Over residues 111–130 (KERKKPGLKKARKARQFSKR) the composition is skewed to basic residues.

Belongs to the universal ribosomal protein uS9 family.

This Mycoplasma mobile (strain ATCC 43663 / 163K / NCTC 11711) (Mesomycoplasma mobile) protein is Small ribosomal subunit protein uS9.